Here is a 447-residue protein sequence, read N- to C-terminus: uncharacterized protein (447 aa).

3 disordered regions span residues methionine 1–serine 80, alanine 115–proline 184, and leucine 295–isoleucine 322. Over residues glutamine 11 to serine 32 the composition is skewed to basic and acidic residues. Positions lysine 42–serine 51 are enriched in polar residues. Basic and acidic residues predominate over residues valine 61–aspartate 72. Over residues alanine 115–serine 158 the composition is skewed to polar residues. Over residues serine 300 to glycine 321 the composition is skewed to low complexity. The next 2 membrane-spanning stretches (helical) occupy residues phenylalanine 385–leucine 405 and isoleucine 424–glycine 444.

The protein resides in the membrane. This is an uncharacterized protein from Schizosaccharomyces pombe (strain 972 / ATCC 24843) (Fission yeast).